The chain runs to 100 residues: Small ribosomal subunit protein uS14c (100 aa).

This sequence belongs to the universal ribosomal protein uS14 family. Part of the 30S ribosomal subunit.

The protein resides in the plastid. Its subcellular location is the chloroplast. Its function is as follows. Binds 16S rRNA, required for the assembly of 30S particles. This chain is Small ribosomal subunit protein uS14c, found in Anthoceros angustus (Hornwort).